Here is a 405-residue protein sequence, read N- to C-terminus: Phosphatidylinositol 5-phosphate 4-kinase type-2 alpha (405 aa).

The 373-residue stretch at Ala-32 to Leu-404 folds into the PIPK domain. The interval Gln-287–Leu-326 is disordered. Positions Glu-288–Ser-303 are enriched in acidic residues.

Homodimer. Phosphorylated in tyrosines. Phosphorylation is induced by light and increases kinase activity.

It is found in the cell membrane. Its subcellular location is the nucleus. It localises to the lysosome. The protein resides in the cytoplasm. It carries out the reaction a 1,2-diacyl-sn-glycero-3-phospho-(1D-myo-inositol-5-phosphate) + ATP = a 1,2-diacyl-sn-glycero-3-phospho-(1D-myo-inositol-4,5-bisphosphate) + ADP + H(+). It catalyses the reaction 1,2-dihexadecanoyl-sn-glycero-3-phospho-(1D-myo-inositol-5-phosphate) + ATP = 1,2-dihexadecanoyl-sn-glycero-3-phospho-(1D-myo-inositol-4,5-bisphosphate) + ADP + H(+). The catalysed reaction is 1,2-dihexadecanoyl-sn-glycero-3-phospho-(1D-myo-inositol-5-phosphate) + GTP = 1,2-dihexadecanoyl-sn-glycero-3-phospho-(1D-myo-inositol-4,5-bisphosphate) + GDP + H(+). With respect to regulation, in rod outer segments, activated by light. Its function is as follows. Catalyzes the phosphorylation of phosphatidylinositol 5-phosphate (PtdIns5P) on the fourth hydroxyl of the myo-inositol ring, to form phosphatidylinositol 4,5-bisphosphate (PtdIns(4,5)P2). Has both ATP- and GTP-dependent kinase activities. In Gallus gallus (Chicken), this protein is Phosphatidylinositol 5-phosphate 4-kinase type-2 alpha (PIP4K2A).